The primary structure comprises 363 residues: 3-isopropylmalate dehydrogenase (363 aa).

Position 78-91 (78-91 (GKRWDHLPINERPE)) interacts with NAD(+). 4 residues coordinate substrate: Arg-99, Arg-109, Arg-138, and Asp-227. Mg(2+)-binding residues include Asp-227, Asp-251, and Asp-255. Position 285-297 (285-297 (GSAPDIAGKNTAN)) interacts with NAD(+).

It belongs to the isocitrate and isopropylmalate dehydrogenases family. LeuB type 1 subfamily. As to quaternary structure, homodimer. Mg(2+) is required as a cofactor. Mn(2+) serves as cofactor.

It is found in the cytoplasm. The catalysed reaction is (2R,3S)-3-isopropylmalate + NAD(+) = 4-methyl-2-oxopentanoate + CO2 + NADH. Its pathway is amino-acid biosynthesis; L-leucine biosynthesis; L-leucine from 3-methyl-2-oxobutanoate: step 3/4. Its function is as follows. Catalyzes the oxidation of 3-carboxy-2-hydroxy-4-methylpentanoate (3-isopropylmalate) to 3-carboxy-4-methyl-2-oxopentanoate. The product decarboxylates to 4-methyl-2 oxopentanoate. This Buchnera aphidicola subsp. Uroleucon helianthicola protein is 3-isopropylmalate dehydrogenase.